The sequence spans 159 residues: Capsid protein (159 aa).

At S2 the chain carries N-acetylserine; by host.

It belongs to the virgaviridae capsid protein family.

It is found in the virion. Functionally, capsid protein self-assembles to form rod-shaped virions about 18 nm in diameter with a central canal enclosing the viral genomic RNA. This is Capsid protein (CP) from Tobacco mosaic virus (strain ER) (TMV).